Here is a 379-residue protein sequence, read N- to C-terminus: GPN-loop GTPase QQT2 (379 aa).

Position 1 is an N-acetylmethionine (M1). Residue 51 to 56 coordinates GTP; sequence GSGKTS. Residues 108-110 carry the Gly-Pro-Asn (GPN)-loop; involved in dimer interface motif; the sequence is GPN. GTP contacts are provided by residues 211-214 and A267; that span reads NKTD. Positions 288–322 form a coiled coil; sequence METYKADLDMRKADKERLEEERKKHEMEKLRKDME. Composition is skewed to basic and acidic residues over residues 303–322 and 335–346; these read ERLEEERKKHEMEKLRKDME and LKDRDATEKMML. The disordered stretch occupies residues 303–379; it reads ERLEEERKKH…EDDETKHYYL (77 aa). Residues 347–372 are compositionally biased toward acidic residues; the sequence is EEDDEDFQVEDEEDSDDAIDEDDEDD.

Belongs to the GPN-loop GTPase family. Heterodimer with QQT1. Expressed in individual cells of roots, leaves and flowers.

It is found in the cytoplasm. The protein resides in the nucleus. Its subcellular location is the cytoskeleton. The protein localises to the spindle. It localises to the phragmoplast. In terms of biological role, small GTPase that is essential for the correct formation of the tangential divisions in early embryos. Associates with microtubule during mitosis and may function in the positioning of the division plane. May participate in the patterning of the early embryo at the octant-dermatogen transition. The sequence is that of GPN-loop GTPase QQT2 from Arabidopsis thaliana (Mouse-ear cress).